Here is a 312-residue protein sequence, read N- to C-terminus: DNA-directed RNA polymerase subunit alpha (312 aa).

The tract at residues M1–T229 is alpha N-terminal domain (alpha-NTD). The alpha C-terminal domain (alpha-CTD) stretch occupies residues S241–V312.

Belongs to the RNA polymerase alpha chain family. As to quaternary structure, in cyanobacteria the RNAP catalytic core is composed of 2 alpha, 1 beta, 1 beta', 1 gamma and 1 omega subunit. When a sigma factor is associated with the core the holoenzyme is formed, which can initiate transcription.

The enzyme catalyses RNA(n) + a ribonucleoside 5'-triphosphate = RNA(n+1) + diphosphate. Functionally, DNA-dependent RNA polymerase catalyzes the transcription of DNA into RNA using the four ribonucleoside triphosphates as substrates. The protein is DNA-directed RNA polymerase subunit alpha of Prochlorococcus marinus (strain MIT 9215).